The primary structure comprises 240 residues: MAFGPAAMGYDRAITIFSPDGSLYQVDYAFEAVKKGWTTLGVKTKNAVVILGEKKKASQLLDVDSIEKVFLLDDHVGCSFAGLASDGRILIDYARNSSLQHRLVYDEPISIDYLTKLISDVKQMYTQHGGVRPFGVALIVGGVDRGVTKLFMTEPSGQFMPYQAVAIGQGGYNATDYLEKNYKEDLSVEETILLALNALKVTLKPGEKLGPGNVEIGFATKEGQFRKMTLEERANYLQKI.

Belongs to the peptidase T1A family. The 20S proteasome core is composed of 14 alpha and 14 beta subunits that assemble into four stacked heptameric rings, resulting in a barrel-shaped structure. The two inner rings, each composed of seven catalytic beta subunits, are sandwiched by two outer rings, each composed of seven alpha subunits. The catalytic chamber with the active sites is on the inside of the barrel. Has a gated structure, the ends of the cylinder being occluded by the N-termini of the alpha-subunits. Is capped at one or both ends by the proteasome regulatory ATPase, PAN.

Its subcellular location is the cytoplasm. The formation of the proteasomal ATPase PAN-20S proteasome complex, via the docking of the C-termini of PAN into the intersubunit pockets in the alpha-rings, triggers opening of the gate for substrate entry. Interconversion between the open-gate and close-gate conformations leads to a dynamic regulation of the 20S proteasome proteolysis activity. Its function is as follows. Component of the proteasome core, a large protease complex with broad specificity involved in protein degradation. In Metallosphaera sedula (strain ATCC 51363 / DSM 5348 / JCM 9185 / NBRC 15509 / TH2), this protein is Proteasome subunit alpha.